The chain runs to 86 residues: Large ribosomal subunit protein bL28 (86 aa).

It belongs to the bacterial ribosomal protein bL28 family.

The polypeptide is Large ribosomal subunit protein bL28 (Bacteroides thetaiotaomicron (strain ATCC 29148 / DSM 2079 / JCM 5827 / CCUG 10774 / NCTC 10582 / VPI-5482 / E50)).